Consider the following 514-residue polypeptide: 2,3-bisphosphoglycerate-independent phosphoglycerate mutase (514 aa).

2 residues coordinate Mn(2+): aspartate 12 and serine 62. The active-site Phosphoserine intermediate is serine 62. Residues histidine 123, arginine 153–aspartate 154, arginine 185, arginine 191, arginine 260–arginine 263, and lysine 335 each bind substrate. Residues aspartate 402, histidine 406, aspartate 443, histidine 444, and histidine 462 each coordinate Mn(2+).

Belongs to the BPG-independent phosphoglycerate mutase family. As to quaternary structure, monomer. The cofactor is Mn(2+).

The catalysed reaction is (2R)-2-phosphoglycerate = (2R)-3-phosphoglycerate. The protein operates within carbohydrate degradation; glycolysis; pyruvate from D-glyceraldehyde 3-phosphate: step 3/5. In terms of biological role, catalyzes the interconversion of 2-phosphoglycerate and 3-phosphoglycerate. The protein is 2,3-bisphosphoglycerate-independent phosphoglycerate mutase of Lachnoclostridium phytofermentans (strain ATCC 700394 / DSM 18823 / ISDg) (Clostridium phytofermentans).